Reading from the N-terminus, the 343-residue chain is Fructose-1,6-bisphosphatase class 1 (343 aa).

Residues Glu91, Asp113, Ile115, and Asp116 each contribute to the Mg(2+) site. Substrate contacts are provided by residues 116–119, Asn210, and Lys276; that span reads DGSS. Mg(2+) is bound at residue Glu282.

This sequence belongs to the FBPase class 1 family. Homotetramer. Requires Mg(2+) as cofactor.

The protein localises to the cytoplasm. The catalysed reaction is beta-D-fructose 1,6-bisphosphate + H2O = beta-D-fructose 6-phosphate + phosphate. Its pathway is carbohydrate biosynthesis; gluconeogenesis. In Parvibaculum lavamentivorans (strain DS-1 / DSM 13023 / NCIMB 13966), this protein is Fructose-1,6-bisphosphatase class 1.